The sequence spans 177 residues: ATP-dependent protease subunit HslV (177 aa).

T6 is an active-site residue. Residues A162, C165, and T168 each coordinate Na(+).

Belongs to the peptidase T1B family. HslV subfamily. In terms of assembly, a double ring-shaped homohexamer of HslV is capped on each side by a ring-shaped HslU homohexamer. The assembly of the HslU/HslV complex is dependent on binding of ATP.

The protein resides in the cytoplasm. The enzyme catalyses ATP-dependent cleavage of peptide bonds with broad specificity.. Allosterically activated by HslU binding. Functionally, protease subunit of a proteasome-like degradation complex believed to be a general protein degrading machinery. The polypeptide is ATP-dependent protease subunit HslV (Lawsonia intracellularis (strain PHE/MN1-00)).